The sequence spans 260 residues: Ribosomal RNA small subunit methyltransferase A (260 aa).

Residues Leu-23, Gly-48, Glu-69, Asp-94, and Asn-110 each contribute to the S-adenosyl-L-methionine site.

It belongs to the class I-like SAM-binding methyltransferase superfamily. rRNA adenine N(6)-methyltransferase family. RsmA subfamily.

The protein localises to the cytoplasm. The catalysed reaction is adenosine(1518)/adenosine(1519) in 16S rRNA + 4 S-adenosyl-L-methionine = N(6)-dimethyladenosine(1518)/N(6)-dimethyladenosine(1519) in 16S rRNA + 4 S-adenosyl-L-homocysteine + 4 H(+). Specifically dimethylates two adjacent adenosines (A1518 and A1519) in the loop of a conserved hairpin near the 3'-end of 16S rRNA in the 30S particle. May play a critical role in biogenesis of 30S subunits. The polypeptide is Ribosomal RNA small subunit methyltransferase A (Thermotoga petrophila (strain ATCC BAA-488 / DSM 13995 / JCM 10881 / RKU-1)).